Here is a 217-residue protein sequence, read N- to C-terminus: GTP cyclohydrolase 1 (217 aa).

Residues Cys109, His112, and Cys180 each coordinate Zn(2+).

The protein belongs to the GTP cyclohydrolase I family. As to quaternary structure, toroid-shaped homodecamer, composed of two pentamers of five dimers.

The catalysed reaction is GTP + H2O = 7,8-dihydroneopterin 3'-triphosphate + formate + H(+). It participates in cofactor biosynthesis; 7,8-dihydroneopterin triphosphate biosynthesis; 7,8-dihydroneopterin triphosphate from GTP: step 1/1. This chain is GTP cyclohydrolase 1, found in Photobacterium profundum (strain SS9).